Consider the following 63-residue polypeptide: Large ribosomal subunit protein bL28 (63 aa).

Belongs to the bacterial ribosomal protein bL28 family.

The protein is Large ribosomal subunit protein bL28 of Desulfatibacillum aliphaticivorans.